The following is a 312-amino-acid chain: uncharacterized protein (312 aa).

Residues 95-119 (EKRRENPPKLTLPPLPPPAEERKKP) form a disordered region.

It localises to the plastid. Its subcellular location is the chloroplast. This is an uncharacterized protein from Chlamydomonas moewusii (Chlamydomonas eugametos).